We begin with the raw amino-acid sequence, 210 residues long: Large ribosomal subunit protein bL9 (210 aa).

The segment at E172–A210 is disordered. The segment covering A199–A210 has biased composition (acidic residues).

The protein belongs to the bacterial ribosomal protein bL9 family.

Functionally, binds to the 23S rRNA. The sequence is that of Large ribosomal subunit protein bL9 from Sphingopyxis alaskensis (strain DSM 13593 / LMG 18877 / RB2256) (Sphingomonas alaskensis).